We begin with the raw amino-acid sequence, 283 residues long: Elongation factor Ts (283 aa).

An involved in Mg(2+) ion dislocation from EF-Tu region spans residues Thr-80–Val-83.

The protein belongs to the EF-Ts family.

Its subcellular location is the cytoplasm. Its function is as follows. Associates with the EF-Tu.GDP complex and induces the exchange of GDP to GTP. It remains bound to the aminoacyl-tRNA.EF-Tu.GTP complex up to the GTP hydrolysis stage on the ribosome. This chain is Elongation factor Ts, found in Citrobacter koseri (strain ATCC BAA-895 / CDC 4225-83 / SGSC4696).